The chain runs to 256 residues: Ubiquinone/menaquinone biosynthesis C-methyltransferase UbiE (256 aa).

S-adenosyl-L-methionine is bound by residues Thr79, Asp100, and 128 to 129 (DA).

This sequence belongs to the class I-like SAM-binding methyltransferase superfamily. MenG/UbiE family.

It carries out the reaction a 2-demethylmenaquinol + S-adenosyl-L-methionine = a menaquinol + S-adenosyl-L-homocysteine + H(+). The enzyme catalyses a 2-methoxy-6-(all-trans-polyprenyl)benzene-1,4-diol + S-adenosyl-L-methionine = a 5-methoxy-2-methyl-3-(all-trans-polyprenyl)benzene-1,4-diol + S-adenosyl-L-homocysteine + H(+). Its pathway is quinol/quinone metabolism; menaquinone biosynthesis; menaquinol from 1,4-dihydroxy-2-naphthoate: step 2/2. It functions in the pathway cofactor biosynthesis; ubiquinone biosynthesis. Functionally, methyltransferase required for the conversion of demethylmenaquinol (DMKH2) to menaquinol (MKH2) and the conversion of 2-polyprenyl-6-methoxy-1,4-benzoquinol (DDMQH2) to 2-polyprenyl-3-methyl-6-methoxy-1,4-benzoquinol (DMQH2). This is Ubiquinone/menaquinone biosynthesis C-methyltransferase UbiE from Pseudomonas aeruginosa (strain LESB58).